We begin with the raw amino-acid sequence, 63 residues long: Large ribosomal subunit protein uL29 (63 aa).

Belongs to the universal ribosomal protein uL29 family.

This chain is Large ribosomal subunit protein uL29, found in Vibrio parahaemolyticus serotype O3:K6 (strain RIMD 2210633).